The sequence spans 552 residues: CTP synthase (552 aa).

The segment at Met1–Met267 is amidoligase domain. Ser13 contributes to the CTP binding site. Ser13 is a UTP binding site. Residues Ser14–Ile19 and Asp71 each bind ATP. Residues Asp71 and Glu141 each coordinate Mg(2+). CTP contacts are provided by residues Asp148 to Glu150, Lys188 to Gln193, and Lys224. Residues Lys188–Gln193 and Lys224 each bind UTP. Residues Asp292 to Gln534 enclose the Glutamine amidotransferase type-1 domain. Gly354 is an L-glutamine binding site. Cys381 serves as the catalytic Nucleophile; for glutamine hydrolysis. L-glutamine contacts are provided by residues Leu382 to Gln385, Glu405, and Arg462. Residues His507 and Glu509 contribute to the active site. The disordered stretch occupies residues Ser533 to Ser552.

It belongs to the CTP synthase family. In terms of assembly, homotetramer.

The enzyme catalyses UTP + L-glutamine + ATP + H2O = CTP + L-glutamate + ADP + phosphate + 2 H(+). The catalysed reaction is L-glutamine + H2O = L-glutamate + NH4(+). It carries out the reaction UTP + NH4(+) + ATP = CTP + ADP + phosphate + 2 H(+). It functions in the pathway pyrimidine metabolism; CTP biosynthesis via de novo pathway; CTP from UDP: step 2/2. With respect to regulation, allosterically activated by GTP, when glutamine is the substrate; GTP has no effect on the reaction when ammonia is the substrate. The allosteric effector GTP functions by stabilizing the protein conformation that binds the tetrahedral intermediate(s) formed during glutamine hydrolysis. Inhibited by the product CTP, via allosteric rather than competitive inhibition. Functionally, catalyzes the ATP-dependent amination of UTP to CTP with either L-glutamine or ammonia as the source of nitrogen. Regulates intracellular CTP levels through interactions with the four ribonucleotide triphosphates. This chain is CTP synthase, found in Picosynechococcus sp. (strain ATCC 27264 / PCC 7002 / PR-6) (Agmenellum quadruplicatum).